The sequence spans 341 residues: Ribosomal RNA small subunit methyltransferase H (341 aa).

S-adenosyl-L-methionine is bound by residues 47 to 49 (GGY), Asp64, Phe91, Asp109, and Gln116.

This sequence belongs to the methyltransferase superfamily. RsmH family.

It localises to the cytoplasm. The catalysed reaction is cytidine(1402) in 16S rRNA + S-adenosyl-L-methionine = N(4)-methylcytidine(1402) in 16S rRNA + S-adenosyl-L-homocysteine + H(+). Its function is as follows. Specifically methylates the N4 position of cytidine in position 1402 (C1402) of 16S rRNA. This chain is Ribosomal RNA small subunit methyltransferase H, found in Rhizobium leguminosarum bv. trifolii (strain WSM1325).